Here is a 264-residue protein sequence, read N- to C-terminus: uncharacterized protein (264 aa).

The chain crosses the membrane as a helical span at residues 9–29 (LVISILSLIATLSISFNIYFI).

Its subcellular location is the membrane. This is an uncharacterized protein from Ureaplasma parvum serovar 3 (strain ATCC 700970).